A 489-amino-acid polypeptide reads, in one-letter code: Cobyric acid synthase (489 aa).

The GATase cobBQ-type domain occupies alanine 247–alanine 439. Cysteine 328 (nucleophile) is an active-site residue. Histidine 431 is a catalytic residue.

This sequence belongs to the CobB/CobQ family. CobQ subfamily.

The protein operates within cofactor biosynthesis; adenosylcobalamin biosynthesis. In terms of biological role, catalyzes amidations at positions B, D, E, and G on adenosylcobyrinic A,C-diamide. NH(2) groups are provided by glutamine, and one molecule of ATP is hydrogenolyzed for each amidation. This chain is Cobyric acid synthase, found in Marinobacter nauticus (strain ATCC 700491 / DSM 11845 / VT8) (Marinobacter aquaeolei).